Here is a 289-residue protein sequence, read N- to C-terminus: 3-hydroxy-16-methoxy-2,3-dihydrotabersonine N-methyltransferase (289 aa).

The tract at residues 71 to 80 is SAM motif I; the sequence is MLDVGSGLGG. Residues 134-142 form an SAM motif II region; that stretch reads GKFDVVFTI. Residues 161-170 form an SAM motif III region; that stretch reads VAAPGAAIII. The Microbody targeting signal signature appears at 287–289; it reads KSI.

This sequence belongs to the class I-like SAM-binding methyltransferase superfamily. gTMT family. As to quaternary structure, homodimer. In terms of tissue distribution, mainly expressed in young leaves, and, to a lower extent, in mature leaves, flowers, stems and roots (at protein level).

The protein localises to the thylakoid. Its subcellular location is the peroxisome. It carries out the reaction (3R)-3-hydroxy-16-methoxy-2,3-dihydrotabersonine + S-adenosyl-L-methionine = deacetoxyvindoline + S-adenosyl-L-homocysteine + H(+). Its pathway is alkaloid biosynthesis; vindoline biosynthesis. Its activity is regulated as follows. Inhibited by gamma-tocopherol. Its function is as follows. S-adenosyl-L-methionine-dependent N-methyltransferase that catalyzes a nitrogen methylation involved in vindoline biosynthesis. Displays a strict requirement for a 2,3-dihydro bond in the aspidosperma skeleton. Can use 2,3-dihydrotabersonine, 2,3-dihydro-3-hydroxytabersonine and 2,3,6,7-tetraydro-3-hydroxytabersonine as substrates, but not tabersonine, vincadifformine, 21-hydroxycyclolochnericine, tryptamine, norharmane, harmaline, catharanthine, norajmaline, ajmaline, serpentine, ajmalicine, yohimbine or gamma-tocopherol. Inactive with picrinine as substrate. This chain is 3-hydroxy-16-methoxy-2,3-dihydrotabersonine N-methyltransferase, found in Catharanthus roseus (Madagascar periwinkle).